The primary structure comprises 218 residues: Protein OPG170 (218 aa).

The signal sequence occupies residues 1–16 (MYSLVFVILMCIPFSF). Asn70 carries N-linked (GlcNAc...) asparagine; by host glycosylation.

The protein belongs to the orthopoxvirus OPG170 family.

The protein localises to the secreted. Its function is as follows. May interact with several cellular chemokines to interfere with chemokine-glycosaminoglycan (GAG) interactions at the cell surface to alter chemotaxis of nearby responsive cells. The protein is Protein OPG170 (OPG170) of Homo sapiens (Human).